Consider the following 164-residue polypeptide: Sec-independent protein translocase protein TatB (164 aa).

Residues 1 to 21 (MIDIGLSKMALIGAVALIVIG) traverse the membrane as a helical segment. Residues 81 to 102 (ASEFQKDWESGTSDAAATGHDG) are disordered.

It belongs to the TatB family. In terms of assembly, the Tat system comprises two distinct complexes: a TatABC complex, containing multiple copies of TatA, TatB and TatC subunits, and a separate TatA complex, containing only TatA subunits. Substrates initially bind to the TatABC complex, which probably triggers association of the separate TatA complex to form the active translocon.

Its subcellular location is the cell inner membrane. Its function is as follows. Part of the twin-arginine translocation (Tat) system that transports large folded proteins containing a characteristic twin-arginine motif in their signal peptide across membranes. Together with TatC, TatB is part of a receptor directly interacting with Tat signal peptides. TatB may form an oligomeric binding site that transiently accommodates folded Tat precursor proteins before their translocation. The polypeptide is Sec-independent protein translocase protein TatB (Paracidovorax citrulli (strain AAC00-1) (Acidovorax citrulli)).